We begin with the raw amino-acid sequence, 66 residues long: DNA-directed RNA polymerase subunit omega (66 aa).

The protein belongs to the RNA polymerase subunit omega family. As to quaternary structure, the RNAP catalytic core consists of 2 alpha, 1 beta, 1 beta' and 1 omega subunit. When a sigma factor is associated with the core the holoenzyme is formed, which can initiate transcription.

It carries out the reaction RNA(n) + a ribonucleoside 5'-triphosphate = RNA(n+1) + diphosphate. Promotes RNA polymerase assembly. Latches the N- and C-terminal regions of the beta' subunit thereby facilitating its interaction with the beta and alpha subunits. The protein is DNA-directed RNA polymerase subunit omega of Clostridium botulinum (strain Eklund 17B / Type B).